A 118-amino-acid polypeptide reads, in one-letter code: MIVGHGIDLQDISAIEKVYLRNARFARKVLTDKELALFEQFSHNRKMTYLAGRWAGKEAFSKAMGTGIGQLTFQDIEIINDSKGRPVITKSPFQGKAFISISHSGGYVQASVILEDLA.

Residues aspartate 8 and glutamate 58 each coordinate Mg(2+).

Belongs to the P-Pant transferase superfamily. AcpS family. Requires Mg(2+) as cofactor.

The protein resides in the cytoplasm. The catalysed reaction is apo-[ACP] + CoA = holo-[ACP] + adenosine 3',5'-bisphosphate + H(+). In terms of biological role, transfers the 4'-phosphopantetheine moiety from coenzyme A to a Ser of acyl-carrier-protein. In Streptococcus equi subsp. zooepidemicus (strain MGCS10565), this protein is Holo-[acyl-carrier-protein] synthase.